The primary structure comprises 1029 residues: Multiple C2 domain and transmembrane region protein 6 (1029 aa).

The C2 1 domain maps to 1 to 111; the sequence is MNKLVVEIVD…SGVQRYPLDK (111 aa). A disordered region spans residues 187–224; sequence TKKKEKESRTFHSIGAHAGGGGGAPPMSQAKQAYPPPP. 3 consecutive C2 domains span residues 277 to 398, 437 to 562, and 605 to 727; these read RSSG…PQWY, RVSH…PRWF, and FSSD…THFY. Ca(2+) is bound by residues D310, D316, D363, D365, and D371. Transmembrane regions (helical) follow at residues 864–884 and 976–996; these read LILVCYPELILPTVFLYLFVI and FALIWAVFIYVTPFQVIAIII.

Belongs to the MCTP family. Requires Ca(2+) as cofactor. Expressed in the vascular tissues of cotyledons and rosette leaves. Accumulates in roots caps and shoot apical meristems (SAMs). Observed in flowers.

It is found in the cell membrane. The protein localises to the cytoplasm. It localises to the endosome membrane. Its function is as follows. Regulates flowering time under long days. May function as a signaling molecule by regulating the trafficking of other regulators. This chain is Multiple C2 domain and transmembrane region protein 6, found in Arabidopsis thaliana (Mouse-ear cress).